The following is a 716-amino-acid chain: Beta-galactosidase (716 aa).

Glu-389 serves as the catalytic Proton donor. Glu-462 (nucleophile) is an active-site residue.

Belongs to the glycosyl hydrolase 2 family. Homodimer.

It carries out the reaction Hydrolysis of terminal non-reducing beta-D-galactose residues in beta-D-galactosides.. Displays beta-galactosidase activity with the artificial chromogenic substrate o-nitrophenyl-beta-D-galactopyranoside (ONPG). In Thermoanaerobacterium thermosulfurigenes (Clostridium thermosulfurogenes), this protein is Beta-galactosidase.